The chain runs to 292 residues: MAVSLNDIKTKIASTKNTSQITNAMQMVSAAKLGRSEEAARNFQVYAQKVRKLLTDILHGNGAGASTNPMLISRSVKKTGYIVITSDRGLVGGYNSSILKAVMELKEEYHPDGKGFEMICIGGMGADFFKARGIQPLYELRGLADQPSFDQVRKIISKTVEMYQNELFDELYVCYNHHVNTLTSQMRVEQMLPIVDLDPNEADEEYSLTFELETSREEILEQLLPQFAESMIYGAIIDAKTAENAAGMTAMQTATDNAKKVINDLTIQYNRARQAAITQEITEIVAGASALE.

It belongs to the ATPase gamma chain family. As to quaternary structure, F-type ATPases have 2 components, CF(1) - the catalytic core - and CF(0) - the membrane proton channel. CF(1) has five subunits: alpha(3), beta(3), gamma(1), delta(1), epsilon(1). CF(0) has three main subunits: a, b and c.

It is found in the cell membrane. In terms of biological role, produces ATP from ADP in the presence of a proton gradient across the membrane. The gamma chain is believed to be important in regulating ATPase activity and the flow of protons through the CF(0) complex. This Streptococcus pneumoniae (strain JJA) protein is ATP synthase gamma chain.